The primary structure comprises 302 residues: Oxygen-dependent coproporphyrinogen-III oxidase (302 aa).

S94 contributes to the substrate binding site. H98 and H108 together coordinate a divalent metal cation. Residue H108 is the Proton donor of the active site. 110 to 112 is a binding site for substrate; that stretch reads NVR. H147 and H177 together coordinate a divalent metal cation. Residues 242–277 are important for dimerization; it reads YVEFNLVWDRGTLFGLQSGGRTESILMSMPPLVRWE. Position 260–262 (260–262) interacts with substrate; it reads GGR.

This sequence belongs to the aerobic coproporphyrinogen-III oxidase family. As to quaternary structure, homodimer. A divalent metal cation is required as a cofactor.

It localises to the cytoplasm. It carries out the reaction coproporphyrinogen III + O2 + 2 H(+) = protoporphyrinogen IX + 2 CO2 + 2 H2O. It participates in porphyrin-containing compound metabolism; protoporphyrin-IX biosynthesis; protoporphyrinogen-IX from coproporphyrinogen-III (O2 route): step 1/1. Its function is as follows. Involved in the heme biosynthesis. Catalyzes the aerobic oxidative decarboxylation of propionate groups of rings A and B of coproporphyrinogen-III to yield the vinyl groups in protoporphyrinogen-IX. This is Oxygen-dependent coproporphyrinogen-III oxidase from Chromobacterium violaceum (strain ATCC 12472 / DSM 30191 / JCM 1249 / CCUG 213 / NBRC 12614 / NCIMB 9131 / NCTC 9757 / MK).